We begin with the raw amino-acid sequence, 31 residues long: Cytochrome b6-f complex subunit 6 (31 aa).

The chain crosses the membrane as a helical span at residues 4 to 24 (ITSYFGFLLVALTITSALFIG).

Belongs to the PetL family. As to quaternary structure, the 4 large subunits of the cytochrome b6-f complex are cytochrome b6, subunit IV (17 kDa polypeptide, PetD), cytochrome f and the Rieske protein, while the 4 small subunits are PetG, PetL, PetM and PetN. The complex functions as a dimer.

The protein localises to the plastid. Its subcellular location is the chloroplast thylakoid membrane. In terms of biological role, component of the cytochrome b6-f complex, which mediates electron transfer between photosystem II (PSII) and photosystem I (PSI), cyclic electron flow around PSI, and state transitions. PetL is important for photoautotrophic growth as well as for electron transfer efficiency and stability of the cytochrome b6-f complex. The protein is Cytochrome b6-f complex subunit 6 of Panax ginseng (Korean ginseng).